The primary structure comprises 216 residues: Somatotropin (216 aa).

The first 26 residues, 1-26, serve as a signal peptide directing secretion; sequence MAADSQTSRLLTFTLLCLLWPQEAGA. Histidine 45 contacts Zn(2+). The cysteines at positions 78 and 189 are disulfide-linked. Residue serine 131 is modified to Phosphoserine. Glutamate 198 serves as a coordination point for Zn(2+). Cysteine 206 and cysteine 214 are joined by a disulfide.

Belongs to the somatotropin/prolactin family.

The protein localises to the secreted. In terms of biological role, plays an important role in growth control. Its major role in stimulating body growth is to stimulate the liver and other tissues to secrete IGF1. It stimulates both the differentiation and proliferation of myoblasts. It also stimulates amino acid uptake and protein synthesis in muscle and other tissues. This chain is Somatotropin (GH1), found in Mesocricetus auratus (Golden hamster).